The chain runs to 259 residues: GTP-binding protein RHO4 (259 aa).

Residue 59-66 participates in GTP binding; it reads GDGATGKT. The Effector region signature appears at 81-89; sequence YVPTIFENY. GTP is bound by residues 107–111 and 165–168; these read DTAGQ and LKSD. Cysteine methyl ester is present on Cys-256. The S-geranylgeranyl cysteine moiety is linked to residue Cys-256. A propeptide spans 257–259 (removed in mature form); sequence VVL.

Belongs to the small GTPase superfamily. Rho family.

Its subcellular location is the cell membrane. The protein is GTP-binding protein RHO4 (RHO4) of Eremothecium gossypii (strain ATCC 10895 / CBS 109.51 / FGSC 9923 / NRRL Y-1056) (Yeast).